The primary structure comprises 118 residues: MARIAGVNIPDHKHVLISLTAIYGIGRTRAGLICKNAGIETDKKVRELSDEQVERLRGEVAKFVVEGDLRREVAMNIKRLMDLGSYRGMRHRRGLPVRGQRTRTNARTRKGPRRPIKK.

The segment at 91–118 (HRRGLPVRGQRTRTNARTRKGPRRPIKK) is disordered.

This sequence belongs to the universal ribosomal protein uS13 family. In terms of assembly, part of the 30S ribosomal subunit. Forms a loose heterodimer with protein S19. Forms two bridges to the 50S subunit in the 70S ribosome.

Functionally, located at the top of the head of the 30S subunit, it contacts several helices of the 16S rRNA. In the 70S ribosome it contacts the 23S rRNA (bridge B1a) and protein L5 of the 50S subunit (bridge B1b), connecting the 2 subunits; these bridges are implicated in subunit movement. Contacts the tRNAs in the A and P-sites. The polypeptide is Small ribosomal subunit protein uS13 (Methylococcus capsulatus (strain ATCC 33009 / NCIMB 11132 / Bath)).